A 627-amino-acid polypeptide reads, in one-letter code: (R)-linalool synthase, chloroplastic (627 aa).

The N-terminal 21 residues, 1-21, are a transit peptide targeting the chloroplast; that stretch reads MAFVSIAPLASRCCVHKSFVS. Residues D378, D382, and E530 each coordinate Mg(2+). Positions 378–382 match the DDXXD motif motif; that stretch reads DDIYD.

Belongs to the terpene synthase family. Tpsd subfamily. It depends on Mg(2+) as a cofactor. Requires Mn(2+) as cofactor.

The protein localises to the plastid. It localises to the chloroplast. It carries out the reaction (2E)-geranyl diphosphate + H2O = (R)-linalool + diphosphate. The protein operates within terpene metabolism; oleoresin biosynthesis. Terpene synthase (TPS) involved in the biosynthesis of monoterpene natural products included in conifer oleoresin secretions and volatile emissions; these compounds contribute to biotic and abiotic stress defense against herbivores and pathogens. Catalyzes the conversion of (2E)-geranyl diphosphate (GPP) to (R)-linalool. The sequence is that of (R)-linalool synthase, chloroplastic from Picea glauca (White spruce).